We begin with the raw amino-acid sequence, 49 residues long: Osteocalcin (49 aa).

In terms of domain architecture, Gla spans 1–47 (YLDPGLGAPAPYPDPLEPKREVCELNPDCDELADHIGFQEAYRRFYG). Proline 9 is modified (hydroxyproline). Ca(2+)-binding residues include glutamate 17, glutamate 21, glutamate 24, and aspartate 30. 4-carboxyglutamate occurs at positions 17, 21, and 24. A disulfide bridge connects residues cysteine 23 and cysteine 29.

It belongs to the osteocalcin/matrix Gla protein family. Gamma-carboxyglutamate residues are formed by vitamin K dependent carboxylation by GGCX. These residues are essential for the binding of calcium. Decarboxylation promotes the hormone activity.

The protein localises to the secreted. Functionally, the carboxylated form is one of the main organic components of the bone matrix, which constitutes 1-2% of the total bone protein. It acts as a negative regulator of bone formation and is required to limit bone formation without impairing bone resorption or mineralization. The carboxylated form binds strongly to apatite and calcium. The uncarboxylated form acts as a hormone secreted by osteoblasts, which regulates different cellular processes, such as energy metabolism, male fertility and brain development. Regulates of energy metabolism by acting as a hormone favoring pancreatic beta-cell proliferation, insulin secretion and sensitivity and energy expenditure. Uncarboxylated osteocalcin hormone also promotes testosterone production in the testes: acts as a ligand for G protein-coupled receptor GPRC6A at the surface of Leydig cells, initiating a signaling response that promotes the expression of enzymes required for testosterone synthesis in a CREB-dependent manner. Also acts as a regulator of brain development: osteocalcin hormone crosses the blood-brain barrier and acts as a ligand for GPR158 on neurons, initiating a signaling response that prevents neuronal apoptosis in the hippocampus, favors the synthesis of all monoamine neurotransmitters and inhibits that of gamma-aminobutyric acid (GABA). Osteocalcin also crosses the placenta during pregnancy and maternal osteocalcin is required for fetal brain development. This Capra hircus (Goat) protein is Osteocalcin (BGLAP).